A 322-amino-acid polypeptide reads, in one-letter code: Ferredoxin--NADP reductase (322 aa).

7 residues coordinate FAD: aspartate 34, glutamine 42, tyrosine 47, valine 87, phenylalanine 120, aspartate 279, and threonine 320.

Belongs to the ferredoxin--NADP reductase type 2 family. In terms of assembly, homodimer. It depends on FAD as a cofactor.

The catalysed reaction is 2 reduced [2Fe-2S]-[ferredoxin] + NADP(+) + H(+) = 2 oxidized [2Fe-2S]-[ferredoxin] + NADPH. This chain is Ferredoxin--NADP reductase, found in Streptococcus pneumoniae serotype 19F (strain G54).